Reading from the N-terminus, the 282-residue chain is ATP phosphoribosyltransferase (282 aa).

It belongs to the ATP phosphoribosyltransferase family. Long subfamily. It depends on Mg(2+) as a cofactor.

The protein resides in the cytoplasm. The catalysed reaction is 1-(5-phospho-beta-D-ribosyl)-ATP + diphosphate = 5-phospho-alpha-D-ribose 1-diphosphate + ATP. Its pathway is amino-acid biosynthesis; L-histidine biosynthesis; L-histidine from 5-phospho-alpha-D-ribose 1-diphosphate: step 1/9. Its activity is regulated as follows. Feedback inhibited by histidine. Functionally, catalyzes the condensation of ATP and 5-phosphoribose 1-diphosphate to form N'-(5'-phosphoribosyl)-ATP (PR-ATP). Has a crucial role in the pathway because the rate of histidine biosynthesis seems to be controlled primarily by regulation of HisG enzymatic activity. In Micrococcus luteus (strain ATCC 4698 / DSM 20030 / JCM 1464 / CCM 169 / CCUG 5858 / IAM 1056 / NBRC 3333 / NCIMB 9278 / NCTC 2665 / VKM Ac-2230) (Micrococcus lysodeikticus), this protein is ATP phosphoribosyltransferase.